The sequence spans 359 residues: Peptide chain release factor 1 (359 aa).

Position 233 is an N5-methylglutamine (Gln-233).

Belongs to the prokaryotic/mitochondrial release factor family. Post-translationally, methylated by PrmC. Methylation increases the termination efficiency of RF1.

Its subcellular location is the cytoplasm. Its function is as follows. Peptide chain release factor 1 directs the termination of translation in response to the peptide chain termination codons UAG and UAA. The protein is Peptide chain release factor 1 of Clostridium acetobutylicum (strain ATCC 824 / DSM 792 / JCM 1419 / IAM 19013 / LMG 5710 / NBRC 13948 / NRRL B-527 / VKM B-1787 / 2291 / W).